We begin with the raw amino-acid sequence, 100 residues long: MYAIVKTGGKQYKVAEGDLVKVEKIEGEPGSSVALTPVLVVDGANVTTGDKLASVNVNAEIVEHVRGPKIRGMHYRNKTGYKRRFGHRQSLTVLKVTGIK.

The protein belongs to the bacterial ribosomal protein bL21 family. As to quaternary structure, part of the 50S ribosomal subunit. Contacts protein L20.

In terms of biological role, this protein binds to 23S rRNA in the presence of protein L20. This chain is Large ribosomal subunit protein bL21, found in Corynebacterium jeikeium (strain K411).